The following is a 470-amino-acid chain: Sorting nexin-17 (470 aa).

In terms of domain architecture, PX spans methionine 1–threonine 109. Residues arginine 36, serine 38, lysine 62, and arginine 75 each coordinate a 1,2-diacyl-sn-glycero-3-phospho-(1D-myo-inositol-3-phosphate). A Ras-associating domain is found at glutamate 115–tryptophan 206. Residues glutamate 115–leucine 432 are FERM-like. The segment at glycine 270–leucine 432 is PTB-like F3 module. Residues serine 336, serine 407, serine 409, serine 415, serine 421, serine 437, and serine 440 each carry the phosphoserine modification. Positions glycine 401–arginine 426 are disordered. The interval glycine 458–leucine 470 is interacts with the retriever complex.

It belongs to the sorting nexin family. In terms of assembly, monomer. Interacts with APP (via cytoplasmic YXNPXY motif). Interacts with KIF1B. Interacts with the C-termini of P-selectin, PTC, LDLR, VLDLR, LRP1 and LRP8. Interacts with KRIT1 (via N-terminus). Interacts with HRAS. Interacts with ITGB1 and ITGB5 (via NPxY motif). Interacts with CCDC22 and CCDC93; the interaction associates SNX17 with the CCC complex. Interacts (via C-terminus) with VPS26C and VPS35L; the interactions are direct and associate SNX17 with the retriever complex.

It is found in the cytoplasm. The protein localises to the early endosome. Its subcellular location is the cytoplasmic vesicle membrane. In terms of biological role, critical regulator of endosomal recycling of numerous surface proteins, including integrins, signaling receptor and channels. Binds to NPxY sequences in the cytoplasmic tails of target cargos. Associates with retriever and CCC complexes to prevent lysosomal degradation and promote cell surface recycling of numerous cargos such as integrins ITGB1, ITGB5 and their associated alpha subunits. Also required for maintenance of normal cell surface levels of APP and LRP1. Interacts with membranes containing phosphatidylinositol 3-phosphate (PtdIns(3P)). This chain is Sorting nexin-17 (SNX17), found in Homo sapiens (Human).